We begin with the raw amino-acid sequence, 201 residues long: Probable molybdenum cofactor guanylyltransferase (201 aa).

Residues 16 to 18, lysine 28, aspartate 75, and aspartate 107 each bind GTP; that span reads LAG. Aspartate 107 serves as a coordination point for Mg(2+).

It belongs to the MobA family. Mg(2+) serves as cofactor.

The protein localises to the cytoplasm. The enzyme catalyses Mo-molybdopterin + GTP + H(+) = Mo-molybdopterin guanine dinucleotide + diphosphate. Transfers a GMP moiety from GTP to Mo-molybdopterin (Mo-MPT) cofactor (Moco or molybdenum cofactor) to form Mo-molybdopterin guanine dinucleotide (Mo-MGD) cofactor. The protein is Probable molybdenum cofactor guanylyltransferase of Mycobacterium ulcerans (strain Agy99).